The chain runs to 321 residues: NADH-ubiquinone oxidoreductase chain 1 (321 aa).

8 helical membrane-spanning segments follow: residues Ile7 to Met27, Ile73 to Ile93, Leu104 to Gly124, Val148 to Leu168, His175 to Ala195, Phe227 to Ile247, Glu256 to Ile276, and Leu297 to Ile317.

Belongs to the complex I subunit 1 family.

The protein localises to the mitochondrion inner membrane. The catalysed reaction is a ubiquinone + NADH + 5 H(+)(in) = a ubiquinol + NAD(+) + 4 H(+)(out). Its function is as follows. Core subunit of the mitochondrial membrane respiratory chain NADH dehydrogenase (Complex I) that is believed to belong to the minimal assembly required for catalysis. Complex I functions in the transfer of electrons from NADH to the respiratory chain. The immediate electron acceptor for the enzyme is believed to be ubiquinone. The chain is NADH-ubiquinone oxidoreductase chain 1 (MT-ND1) from Varanus dumerilii (Dumeril's monitor).